Consider the following 679-residue polypeptide: PHD finger protein PERSISTENT TAPETAL CELL 1 (679 aa).

The PHD-type zinc-finger motif lies at 620-670; sequence VVDCACGAVDDDGERMACCDICEAWQHTRCAGIADTEDAPHVFLCSRCDND.

In terms of biological role, probable transcriptional activator required for tapetal programmed cell death (PCD) and degeneration, and pollen development in anthers. The chain is PHD finger protein PERSISTENT TAPETAL CELL 1 from Oryza sativa subsp. japonica (Rice).